A 51-amino-acid polypeptide reads, in one-letter code: Lantibiotic lacticin-481 (51 aa).

The propeptide occupies 1-24; it reads MKEQNSFNLLQEVTESELDLILGA. Residues 33–38 constitute a cross-link (beta-methyllanthionine (Thr-Cys)); sequence TISHEC. 2 cross-links (lanthionine (Ser-Cys)) span residues 35-49 and 42-50; these read SHEC…VFTC and SWQFVFTCC. At T48 the chain carries (Z)-2,3-didehydrobutyrine.

The protein belongs to the type A lantibiotic family. As to quaternary structure, monomer or homodimer. In terms of processing, maturation of lantibiotics involves the enzymatic conversion of Thr, and Ser into dehydrated AA and the formation of thioether bonds with cysteine. This is followed by membrane translocation and cleavage of the modified precursor. Post-translationally, it is established that the 2,3-didehydrobutyrine is the Z-isomer.

In terms of biological role, lanthionine-containing peptide antibiotic (lantibiotic) active on Gram-positive bacteria. The bactericidal activity of lantibiotics is based on depolarization of energized bacterial cytoplasmic membranes, initiated by the formation of aqueous transmembrane pores. Lacticin 481 is a broad spectrum bacteriocin exhibiting activity against a wide range of lactic acid bacteria and C.tyrobutyricum. The chain is Lantibiotic lacticin-481 (lctA) from Lactococcus lactis subsp. lactis (Streptococcus lactis).